Consider the following 172-residue polypeptide: uncharacterized protein (172 aa).

In terms of domain architecture, PfpI endopeptidase spans 3-171; that stretch reads KKVAIILSNE…FNREIVKQLQ (169 aa).

The protein belongs to the peptidase C56 family.

This is an uncharacterized protein from Staphylococcus haemolyticus (strain JCSC1435).